The chain runs to 292 residues: MIKNLLNKRKYITVSSVELNDTELSEDEKPNIPSGMWSKCEKCAKILYTEDLRENFNVCPNCGHHFKLGAYERIKYLTDENTFVEFDKKMIGRNPLDFNGYEEKIKGYQKKSHVIEGVVTGEAYIAQRKVVLCVMDSNFMMGSMGTAVGEKITRAIEYATKNRLPLIIFTCSGGARMQEGIYSLMQMAKVSGAIYRHGRENLLYITVLTNPTTGGVTASFAMEGDIILSEPGCLVGFAGRRVIEGTINEKLPDDFQTAEFLLEKGFIDKIVQRKDLKQVITSLLRMHEVDYE.

The 257-residue stretch at M36–E292 folds into the CoA carboxyltransferase N-terminal domain. Residues C40, C43, C59, and C62 each contribute to the Zn(2+) site. The C4-type zinc-finger motif lies at C40–C62.

It belongs to the AccD/PCCB family. In terms of assembly, acetyl-CoA carboxylase is a heterohexamer composed of biotin carboxyl carrier protein (AccB), biotin carboxylase (AccC) and two subunits each of ACCase subunit alpha (AccA) and ACCase subunit beta (AccD). Zn(2+) is required as a cofactor.

It is found in the cytoplasm. It catalyses the reaction N(6)-carboxybiotinyl-L-lysyl-[protein] + acetyl-CoA = N(6)-biotinyl-L-lysyl-[protein] + malonyl-CoA. It functions in the pathway lipid metabolism; malonyl-CoA biosynthesis; malonyl-CoA from acetyl-CoA: step 1/1. In terms of biological role, component of the acetyl coenzyme A carboxylase (ACC) complex. Biotin carboxylase (BC) catalyzes the carboxylation of biotin on its carrier protein (BCCP) and then the CO(2) group is transferred by the transcarboxylase to acetyl-CoA to form malonyl-CoA. This chain is Acetyl-coenzyme A carboxylase carboxyl transferase subunit beta, found in Clostridium perfringens (strain 13 / Type A).